The following is a 753-amino-acid chain: LON peptidase N-terminal domain and RING finger protein 3 (753 aa).

Positions 17–57 (GSNNLELAEPEEPGTSAAAGQSAAHPEEVTPEGSQALGAQE) are disordered. The TPR 1 repeat unit spans residues 72-105 (CKVLLTQADALASEGHLREALEVYRQLSERQQLV). The segment at 159–197 (CKKCHGFLSDPVSLWCGHTFCKLCLERGRAADRRCALCG) adopts an RING-type 1 zinc-finger fold. 3 TPR repeats span residues 244-277 (ASQL…APND), 279-311 (LLYS…RPMG), and 313-345 (KAHF…DGKN). The disordered stretch occupies residues 351–450 (EAQRENLELP…QGAKPDLSNP (100 aa)). Low complexity predominate over residues 363 to 382 (SNQEGAAAAEESSSLANSAQ). Positions 386 to 413 (SSKEDRKKDQEGEDRDAASVRTGKCQEK) are enriched in basic and acidic residues. The RING-type 2 zinc finger occupies 461-499 (CSLCMRLFYEPVTTPCGHTFCLKCLERCLDHNAKCPLCK). Residues 540-749 (MEELSNLNKN…GIRRILAFIS (210 aa)) form the Lon N-terminal domain.

The chain is LON peptidase N-terminal domain and RING finger protein 3 (Lonrf3) from Mus musculus (Mouse).